A 144-amino-acid chain; its full sequence is Small ribosomal subunit protein uS11 (144 aa).

Residues 123 to 144 (EDVTPVPTDSTRRKGSRRGRRL) are disordered. Residues 135–144 (RKGSRRGRRL) are compositionally biased toward basic residues.

Belongs to the universal ribosomal protein uS11 family.

The protein is Small ribosomal subunit protein uS11 (RPS14) of Trypanosoma brucei brucei.